The following is a 199-amino-acid chain: NAD(P)H dehydrogenase (quinone) (199 aa).

In terms of domain architecture, Flavodoxin-like spans 4-190 (VLVLYYSSYG…EGARHQGELV (187 aa)). Residues 10 to 15 (SSYGHI) and 78 to 80 (TRY) each bind FMN. Position 12 (Tyr12) interacts with NAD(+). Position 98 (Trp98) interacts with substrate. FMN is bound by residues 113–119 (STATQHG) and His134.

It belongs to the WrbA family. FMN is required as a cofactor.

The catalysed reaction is a quinone + NADH + H(+) = a quinol + NAD(+). The enzyme catalyses a quinone + NADPH + H(+) = a quinol + NADP(+). The chain is NAD(P)H dehydrogenase (quinone) from Paraburkholderia phymatum (strain DSM 17167 / CIP 108236 / LMG 21445 / STM815) (Burkholderia phymatum).